A 193-amino-acid chain; its full sequence is Protein CURVATURE THYLAKOID 1D, chloroplastic (193 aa).

The N-terminal 51 residues, 1–51 (MELCTRSTTIITHLPASFNGHGYLAGKSVDRISLPLQRNVASLVLQSRTLR), are a transit peptide targeting the chloroplast. The Stromal portion of the chain corresponds to 52-117 (CSRKFPGETV…NDIKLDSDKT (66 aa)). Residues 118 to 138 (YSILLYGSGAIVALYLTSAIV) form a helical membrane-spanning segment. Topologically, residues 139–142 (SSLE) are lumenal. Residues 143 to 163 (AIPLFPKLMEVVGLGYTLWFT) traverse the membrane as a helical segment. The Stromal portion of the chain corresponds to 164-193 (TRYLLFKRNREELKTKVSEIKKQVLGSDSE).

It belongs to the CURT family. In terms of assembly, homo- and heterodimers and trimers.

It localises to the plastid. It is found in the chloroplast thylakoid membrane. Functionally, determines thylakoid architecture by inducing membrane curvature. The sequence is that of Protein CURVATURE THYLAKOID 1D, chloroplastic (CURT1D) from Arabidopsis thaliana (Mouse-ear cress).